The sequence spans 933 residues: Dual 3',5'-cyclic-AMP and -GMP phosphodiesterase 11A (933 aa).

The interval 42–125 is disordered; the sequence is HSQGQGALGP…ASQKELRKSF (84 aa). A phosphoserine mark is found at serine 162, serine 163, and serine 239. GAF domains lie at 217 to 370 and 402 to 558; these read DLTS…GIAI and DLEK…GLGI. Serine 424 contributes to the 3',5'-cyclic GMP binding site. The PDEase domain occupies 588–912; that stretch reads SKAEVDKFKA…SKWEELHQKR (325 aa). Catalysis depends on histidine 664, which acts as the Proton donor. Histidine 668, histidine 704, aspartate 705, and aspartate 816 together coordinate a divalent metal cation.

This sequence belongs to the cyclic nucleotide phosphodiesterase family. It depends on a divalent metal cation as a cofactor. As to expression, isoform 1 is present in prostate, pituitary, heart and liver. It is however not present in testis nor in penis, suggesting that weak inhibition by Tadalafil (Cialis) is not relevant (at protein level). Isoform 2 may be expressed in testis. Isoform 4 is expressed in adrenal cortex.

The protein resides in the cytoplasm. It localises to the cytosol. It carries out the reaction 3',5'-cyclic GMP + H2O = GMP + H(+). The catalysed reaction is 3',5'-cyclic AMP + H2O = AMP + H(+). Its activity is regulated as follows. Inhibited by 3-isobutyl-1-methylxanthine (IBMX), zaprinast and dipyridamole. cGMP acts as an allosteric activator. Weakly inhibited by Sildenafil (Viagra) and Tadalafil (Cialis); however, the fact that the protein is probably absent from testis, suggests that it is not biologically relevant and is not related with erectile dysfunction. Its function is as follows. Plays a role in signal transduction by regulating the intracellular concentration of cyclic nucleotides cAMP and cGMP. Catalyzes the hydrolysis of both cAMP and cGMP to 5'-AMP and 5'-GMP, respectively. This Homo sapiens (Human) protein is Dual 3',5'-cyclic-AMP and -GMP phosphodiesterase 11A.